The sequence spans 412 residues: DnaJ homolog subfamily A member 2 (412 aa).

Residues 8-70 form the J domain; the sequence is KLYDILGVPP…EKRELYDRYG (63 aa). At lysine 39 the chain carries N6-acetyllysine. 2 positions are modified to phosphoserine: serine 78 and serine 123. The CR-type zinc finger occupies 130-214; the sequence is GKTTKLQLSK…CEGKKVIKEV (85 aa). Lysine 134 is covalently cross-linked (Glycyl lysine isopeptide (Lys-Gly) (interchain with G-Cter in SUMO2)). Zn(2+) is bound by residues cysteine 143 and cysteine 146. A CXXCXGXG motif repeat occupies 143 to 150; the sequence is CSACSGQG. At lysine 152 the chain carries N6-acetyllysine. Cysteine 159, cysteine 162, cysteine 186, cysteine 189, cysteine 202, and cysteine 205 together coordinate Zn(2+). CXXCXGXG motif repeat units follow at residues 159–166, 186–193, and 202–209; these read CSACRGRG, CSDCNGEG, and CKKCEGKK. Residues 365–412 form a disordered region; that stretch reads IGETEEVELQEFDSTRGSGGGQRREAYNDSSDEESSSHHGPGVQCAHQ. Tyrosine 391 is subject to Phosphotyrosine. Serine 394 and serine 395 each carry phosphoserine. Position 409 is a cysteine methyl ester (cysteine 409). A lipid anchor (S-farnesyl cysteine) is attached at cysteine 409. Positions 410 to 412 are cleaved as a propeptide — removed in mature form; it reads AHQ.

It localises to the membrane. Functionally, co-chaperone of Hsc70. Stimulates ATP hydrolysis and the folding of unfolded proteins mediated by HSPA1A/B (in vitro). In Homo sapiens (Human), this protein is DnaJ homolog subfamily A member 2 (DNAJA2).